The sequence spans 393 residues: Elongation factor Tu (393 aa).

Positions 6 to 204 (KPHINVGTIG…ALEKIELPMR (199 aa)) constitute a tr-type G domain. Residues 15–22 (GHVDHGKT) form a G1 region. Residue 15-22 (GHVDHGKT) coordinates GTP. Threonine 22 is a binding site for Mg(2+). A G2 region spans residues 58 to 62 (GITIS). A G3 region spans residues 79–82 (DCPG). Residues 79 to 83 (DCPGH) and 134 to 137 (NKCD) each bind GTP. Positions 134–137 (NKCD) are G4. The G5 stretch occupies residues 172–174 (SAV).

This sequence belongs to the TRAFAC class translation factor GTPase superfamily. Classic translation factor GTPase family. EF-Tu/EF-1A subfamily. In terms of assembly, monomer.

The protein resides in the cytoplasm. It carries out the reaction GTP + H2O = GDP + phosphate + H(+). GTP hydrolase that promotes the GTP-dependent binding of aminoacyl-tRNA to the A-site of ribosomes during protein biosynthesis. In Anaplasma phagocytophilum (strain HZ), this protein is Elongation factor Tu.